We begin with the raw amino-acid sequence, 199 residues long: UPF0301 protein Daci_1578 (199 aa).

The protein belongs to the UPF0301 (AlgH) family.

This chain is UPF0301 protein Daci_1578, found in Delftia acidovorans (strain DSM 14801 / SPH-1).